The sequence spans 2167 residues: SH3 and multiple ankyrin repeat domains protein 1 (2167 aa).

Residues 1–63 are disordered; it reads MTHSPATSED…TRGLQGRSMS (63 aa). Residues 17-32 are compositionally biased toward low complexity; it reads SECPEGGSESDSSPDG. Residues 33–47 show a composition bias toward gly residues; the sequence is PGRGPQGTRGRGSGA. Omega-N-methylarginine is present on arginine 43. Tyrosine 186 carries the phosphotyrosine modification. 7 ANK repeats span residues 195 to 210, 212 to 245, 246 to 278, 279 to 312, 313 to 345, 346 to 378, and 379 to 395; these read VARL…YHDS, SGET…FRAR, DGMT…YKDR, RGLT…IADE, NGWQ…AQNA, SGNT…VKNN, and NGQT…NFEL. 2 disordered regions span residues 413 to 432 and 453 to 546; these read SPKY…TVPP and APGA…SRGR. Low complexity predominate over residues 453 to 479; that stretch reads APGASSSGTPGPTSGPQGQSQPSAPST. The segment covering 527-542 has biased composition (gly residues); the sequence is PAGGTGGSGGPGGSLG. A Phosphoserine modification is found at serine 540. An Omega-N-methylarginine modification is found at arginine 544. Positions 554-613 constitute an SH3 domain; sequence VPGRSFMAVKSYQAQGEGEISLSKGEKIKVLSIGEGGFWEGQVKGRVGWFPSDCLEEVAN. Serine 638, serine 641, serine 671, and serine 791 each carry phosphoserine. One can recognise a PDZ domain in the interval 663–757; the sequence is TVLLQKKDSE…TLMVKVVMVT (95 aa). The interval 841-894 is disordered; that stretch reads ISASESPGPGGLASLGKHRPKGFFATESSFDPHHRSQPSYDRPSFLPPGPGLML. Serine 898 is subject to Phosphoserine. 8 disordered regions span residues 917-1233, 1245-1294, 1308-1417, 1429-1725, 1740-1787, 1842-1866, 1898-1988, and 2002-2029; these read SRSL…LDFT, RREG…SIDE, GGSS…VLRL, RAGL…AGVA, GQAF…DPVT, KLLP…QPQA, PWAR…STRH, and RRAP…LPIL. Pro residues predominate over residues 928-947; that stretch reads IPPPPTTSPPEPPYSTPPAP. At arginine 958 the chain carries Omega-N-methylarginine. Positions 964–980 are enriched in low complexity; the sequence is PSSGGPLPASSPSSFDG. Residues 1004–1028 are compositionally biased toward basic residues; it reads AHHHPPHHHHHHAPPPQPHHHHAHP. Arginine 1059 is modified (omega-N-methylarginine). Over residues 1064-1085 the composition is skewed to low complexity; it reads SPTSGAPSPSHHSSSGGSSGPT. An omega-N-methylarginine mark is found at arginine 1098 and arginine 1109. 2 stretches are compositionally biased toward low complexity: residues 1132-1146 and 1171-1184; these read SIPS…ALPR and STSS…GSST. The span at 1203 to 1224 shows a compositional bias: pro residues; it reads SPAPATSPVPPSPSPVPTPASP. Basic and acidic residues predominate over residues 1245 to 1256; sequence RREGGWQNEARR. The residue at position 1257 (arginine 1257) is an Asymmetric dimethylarginine. The residue at position 1291 (serine 1291) is a Phosphoserine. Basic and acidic residues predominate over residues 1363–1372; the sequence is ARERALKESS. Residues 1378–1395 show a composition bias toward pro residues; the sequence is PQPPPRPPSPRYDAPPPT. Residues 1396–1408 are compositionally biased toward basic residues; sequence LHHHSPHSPHSPH. An Omega-N-methylarginine modification is found at arginine 1429. The residue at position 1442 (serine 1442) is a Phosphoserine. Low complexity-rich tracts occupy residues 1459-1469 and 1530-1541; these read PGVGPLLLQLG and RRVLPTSPTSPR. Pro residues predominate over residues 1589–1615; sequence PLTPGPPHPLPDPPSPATPLPAAPPPA. Residues 1624–1641 are compositionally biased toward polar residues; it reads DSTASSLTSYDSEVATLT. Over residues 1648–1676 the composition is skewed to pro residues; sequence PGDPPAPGPPAPAAPAPPAPQPGPDPPPG. Residues 1684-1694 show a composition bias toward basic and acidic residues; sequence VDSRSSSDHPL. Positions 1695 to 1708 are enriched in low complexity; sequence ETISSASTLSSLSA. Gly residues predominate over residues 1709 to 1724; it reads EGGGNTGGVAGGGAGV. Positions 1850–1861 are enriched in pro residues; that stretch reads PGPPPPPLPGPL. The residue at position 1901 (arginine 1901) is an Omega-N-methylarginine. 3 stretches are compositionally biased toward low complexity: residues 1934 to 1945, 1960 to 1985, and 2002 to 2012; these read SQTSLLSKPSSS, TGSG…ASAS, and RRAPSPSLLPA. Omega-N-methylarginine occurs at positions 2022, 2042, and 2080. An SAM domain is found at 2104 to 2167; the sequence is WTKFDVADWL…DRALKFFLER (64 aa).

This sequence belongs to the SHANK family. In terms of assembly, may homomultimerize via its SAM domain. Interacts with the C-terminus of SSTR2 via the PDZ domain. Interacts with SHARPIN, SPTAN1 and DLGAP1/GKAP. Part of a complex with DLG4/PSD-95 and DLGAP1/GKAP. Interacts with BAIAP2. Interacts with IGSF9. Interacts with HOMER1 and HOMER3. As to expression, expressed only in brain (neuropil of cortex, CA1 region hippocampus and molecular layer of cerebellum).

The protein localises to the cytoplasm. Its subcellular location is the synapse. The protein resides in the postsynaptic density. In terms of biological role, seems to be an adapter protein in the postsynaptic density (PSD) of excitatory synapses that interconnects receptors of the postsynaptic membrane including NMDA-type and metabotropic glutamate receptors, and the actin-based cytoskeleton. Plays a role in the structural and functional organization of the dendritic spine and synaptic junction. Overexpression promotes maturation of dendritic spines and the enlargement of spine heads via its ability to recruit Homer to postsynaptic sites, and enhances presynaptic function. This chain is SH3 and multiple ankyrin repeat domains protein 1 (Shank1), found in Rattus norvegicus (Rat).